Here is a 586-residue protein sequence, read N- to C-terminus: Capsid scaffolding protein (586 aa).

Active-site charge relay system residues include His53, Ser123, and His142. Residues 251–263 (SEETPENAIKDRS) show a composition bias toward basic and acidic residues. 4 disordered regions span residues 251-288 (SEET…HVPA), 330-364 (ARRD…DIWP), 458-486 (NKRD…YFPG), and 530-586 (SASN…MMAD). A compositionally biased stretch (polar residues) spans 264-284 (VSTQTAPSFDISESQQPSGQT). The interval 312–331 (EDMVYVPFEKYASLLAASAR) is interaction with pAP. Interaction with major capsid protein stretches follow at residues 566 to 586 (DAQT…MMAD) and 567 to 586 (AQTK…MMAD).

The protein belongs to the herpesviridae capsid scaffolding protein family. Homomultimer. Interacts with major capsid protein. As to quaternary structure, exists in a monomer-dimer equilibrium with the dimer being the active species. Capsid scaffolding protein is cleaved by assemblin after formation of the spherical procapsid. As a result, the capsid obtains its mature, icosahedral shape. Cleavages occur at two or more sites: release (R-site) and maturation (M-site).

It localises to the host cytoplasm. It is found in the host nucleus. It catalyses the reaction Cleaves -Ala-|-Ser- and -Ala-|-Ala- bonds in the scaffold protein.. In terms of biological role, acts as a scaffold protein by binding major capsid protein in the cytoplasm, inducing the nuclear localization of both proteins. Multimerizes in the nucleus such as major capsid protein forms the icosahedral T=16 capsid. Autocatalytic cleavage releases the assembly protein, and subsequently abolishes interaction with major capsid protein. Cleavages products are evicted from the capsid before or during DNA packaging. Functionally, protease that plays an essential role in virion assembly within the nucleus. Catalyzes the cleavage of the assembly protein after formation of the spherical procapsid. By that cleavage, the capsid matures and gains its icosahedral shape. The cleavage sites seem to include -Ala-Ser-, -Ala-Ala-, as well as Ala-Thr bonds. Assemblin and cleavages products are evicted from the capsid before or during DNA packaging. Its function is as follows. Plays a major role in capsid assembly. Acts as a scaffold protein by binding major capsid protein. Multimerizes in the nucleus such as major capsid protein forms the icosahedral T=16 capsid. Cleaved by assemblin after capsid completion. The cleavages products are evicted from the capsid before or during DNA packaging. In Gallus gallus (Chicken), this protein is Capsid scaffolding protein.